The following is a 337-amino-acid chain: Pantothenate synthetase (337 aa).

31–38 is a binding site for ATP; it reads MGALHEGH. His38 serves as the catalytic Proton donor. Gln65 is a (R)-pantoate binding site. Residue Gln65 participates in beta-alanine binding. 152–155 serves as a coordination point for ATP; the sequence is GQKD. Gln158 is a (R)-pantoate binding site. Residues Val181 and 189–192 each bind ATP; that span reads LSSR.

The protein belongs to the pantothenate synthetase family. In terms of assembly, homodimer.

It is found in the cytoplasm. It carries out the reaction (R)-pantoate + beta-alanine + ATP = (R)-pantothenate + AMP + diphosphate + H(+). It participates in cofactor biosynthesis; (R)-pantothenate biosynthesis; (R)-pantothenate from (R)-pantoate and beta-alanine: step 1/1. Its function is as follows. Catalyzes the condensation of pantoate with beta-alanine in an ATP-dependent reaction via a pantoyl-adenylate intermediate. The chain is Pantothenate synthetase from Streptomyces coelicolor (strain ATCC BAA-471 / A3(2) / M145).